A 209-amino-acid polypeptide reads, in one-letter code: Tektin bundle-interacting protein 1 (209 aa).

In terms of assembly, microtubule inner protein component of sperm flagellar doublet microtubules.

The protein resides in the cytoplasm. It localises to the cytoskeleton. Its subcellular location is the cilium axoneme. It is found in the flagellum axoneme. Its function is as follows. Microtubule inner protein (MIP) part of the dynein-decorated doublet microtubules (DMTs) in cilia axoneme, which is required for motile cilia beating. Located at the center of the tektin bundle where may function to recruit tektins or stabilize the bundle. The sequence is that of Tektin bundle-interacting protein 1 from Homo sapiens (Human).